The chain runs to 746 residues: Probably inactive copalyl diphosphate synthase 3 (746 aa).

The short motif at 331-334 is the DXDD motif; degenerated element; the sequence is DVND.

The protein belongs to the terpene synthase family. Tpsc subfamily. As to expression, mostly expressed in stems, and, at low levels, in roots and leaves, but barely in flowers.

This Isodon rubescens (Rabdosia rubescens) protein is Probably inactive copalyl diphosphate synthase 3.